A 158-amino-acid polypeptide reads, in one-letter code: MAKKTKKPSNQIAANKKARHEYFIEETYEAGLVLQGWEVKAIRAGKMSITEAYVVFRGNEAFLFGAHIQPLLSSSTHVDPDSIRTRKLLLNRKEIDTLFGAVNQKGYACVPLEVYWKDSLVKCKIGLAKGKKLHDKRKTLKDRDWERDKERGFKQHLD.

This sequence belongs to the SmpB family.

The protein resides in the cytoplasm. Its function is as follows. Required for rescue of stalled ribosomes mediated by trans-translation. Binds to transfer-messenger RNA (tmRNA), required for stable association of tmRNA with ribosomes. tmRNA and SmpB together mimic tRNA shape, replacing the anticodon stem-loop with SmpB. tmRNA is encoded by the ssrA gene; the 2 termini fold to resemble tRNA(Ala) and it encodes a 'tag peptide', a short internal open reading frame. During trans-translation Ala-aminoacylated tmRNA acts like a tRNA, entering the A-site of stalled ribosomes, displacing the stalled mRNA. The ribosome then switches to translate the ORF on the tmRNA; the nascent peptide is terminated with the 'tag peptide' encoded by the tmRNA and targeted for degradation. The ribosome is freed to recommence translation, which seems to be the essential function of trans-translation. The sequence is that of SsrA-binding protein from Psychrobacter sp. (strain PRwf-1).